A 108-amino-acid polypeptide reads, in one-letter code: UPF0145 protein AF_0869 (108 aa).

The protein belongs to the UPF0145 family.

This chain is UPF0145 protein AF_0869, found in Archaeoglobus fulgidus (strain ATCC 49558 / DSM 4304 / JCM 9628 / NBRC 100126 / VC-16).